We begin with the raw amino-acid sequence, 117 residues long: Large ribosomal subunit protein bL17 (117 aa).

The protein belongs to the bacterial ribosomal protein bL17 family. Part of the 50S ribosomal subunit. Contacts protein L32.

This chain is Large ribosomal subunit protein bL17, found in Endomicrobium trichonymphae.